The following is a 283-amino-acid chain: uncharacterized protein (283 aa).

Residues Met1 to Ser21 form a disordered region. Residues Ser41–Leu61 form a helical membrane-spanning segment.

It belongs to the APS1/VSP family.

The protein localises to the membrane. This is an uncharacterized protein from Arabidopsis thaliana (Mouse-ear cress).